Here is a 238-residue protein sequence, read N- to C-terminus: Heme oxygenase (238 aa).

A heme b-binding site is contributed by His17.

The protein belongs to the heme oxygenase family.

It localises to the plastid. The protein resides in the chloroplast. The catalysed reaction is heme b + 3 reduced [NADPH--hemoprotein reductase] + 3 O2 = biliverdin IXalpha + CO + Fe(2+) + 3 oxidized [NADPH--hemoprotein reductase] + 3 H2O + H(+). Its function is as follows. Catalyzes the opening of the heme ring with the release of iron. Key enzyme in the synthesis of the chromophoric part of the photosynthetic antennae. The polypeptide is Heme oxygenase (pbsA) (Pyropia yezoensis (Susabi-nori)).